A 389-amino-acid polypeptide reads, in one-letter code: STE20-related kinase adapter protein alpha (389 aa).

In terms of domain architecture, Protein kinase spans 11 to 321 (YELLTIIGRG…AGALLNHPFF (311 aa)).

Belongs to the protein kinase superfamily. STE Ser/Thr protein kinase family. STE20 subfamily. In terms of assembly, component of a trimeric complex composed of STK11/LKB1, STRAD (STRADA or STRADB) and CAB39/MO25 (CAB39/MO25alpha or CAB39L/MO25beta): the complex tethers STK11/LKB1 in the cytoplasm and stimulates its catalytic activity. Expressed in brain, hypothalamus, heart and skeletal muscle.

The protein localises to the nucleus. The protein resides in the cytoplasm. Pseudokinase which, in complex with CAB39/MO25 (CAB39/MO25alpha or CAB39L/MO25beta), binds to and activates STK11/LKB1. Adopts a closed conformation typical of active protein kinases and binds STK11/LKB1 as a pseudosubstrate, promoting conformational change of STK11/LKB1 in an active conformation. This is STE20-related kinase adapter protein alpha (STRADA) from Gallus gallus (Chicken).